Consider the following 142-residue polypeptide: Large ribosomal subunit protein uL11 (142 aa).

Belongs to the universal ribosomal protein uL11 family. Part of the ribosomal stalk of the 50S ribosomal subunit. Interacts with L10 and the large rRNA to form the base of the stalk. L10 forms an elongated spine to which L12 dimers bind in a sequential fashion forming a multimeric L10(L12)X complex. Post-translationally, one or more lysine residues are methylated.

Functionally, forms part of the ribosomal stalk which helps the ribosome interact with GTP-bound translation factors. The sequence is that of Large ribosomal subunit protein uL11 from Xanthomonas axonopodis pv. citri (strain 306).